A 358-amino-acid polypeptide reads, in one-letter code: 2-oxoisovalerate dehydrogenase subunit beta 2, mitochondrial (358 aa).

The N-terminal 16 residues, 1–16, are a transit peptide targeting the mitochondrion; the sequence is MAAALVRRFCRGSSFP. Tyrosine 119 serves as a coordination point for thiamine diphosphate. K(+) is bound by residues glycine 145, leucine 147, threonine 148, aspartate 198, and asparagine 200.

As to quaternary structure, heterotetramer of alpha and beta chains. Thiamine diphosphate is required as a cofactor. In terms of tissue distribution, expressed in the non-photosynthetic organs such as siliques, flowers and roots.

Its subcellular location is the mitochondrion matrix. The enzyme catalyses N(6)-[(R)-lipoyl]-L-lysyl-[protein] + 3-methyl-2-oxobutanoate + H(+) = N(6)-[(R)-S(8)-2-methylpropanoyldihydrolipoyl]-L-lysyl-[protein] + CO2. The branched-chain alpha-keto dehydrogenase complex catalyzes the overall conversion of alpha-keto acids to acyl-CoA and CO(2). It contains multiple copies of three enzymatic components: branched-chain alpha-keto acid decarboxylase (E1), lipoamide acyltransferase (E2) and lipoamide dehydrogenase (E3). Required during sugar starvation and acts under the control of a sugar-sensing mechanism involving Ser/Thr kinases and phosphatases. In Arabidopsis thaliana (Mouse-ear cress), this protein is 2-oxoisovalerate dehydrogenase subunit beta 2, mitochondrial (DIN4).